A 449-amino-acid chain; its full sequence is Xylose isomerase (449 aa).

Active-site residues include H101 and D104. Positions 232, 268, 271, 296, 307, 309, and 340 each coordinate Mg(2+).

The protein belongs to the xylose isomerase family. In terms of assembly, homotetramer. The cofactor is Mg(2+).

The protein resides in the cytoplasm. It carries out the reaction alpha-D-xylose = alpha-D-xylulofuranose. The sequence is that of Xylose isomerase from Bifidobacterium longum (strain DJO10A).